Reading from the N-terminus, the 297-residue chain is Guanylate kinase (297 aa).

Positions 4 to 183 constitute a Guanylate kinase-like domain; that stretch reads GKMIIISGPS…AVAKITDVLH (180 aa). 11–18 provides a ligand contact to ATP; that stretch reads GPSGVGKG. The tract at residues 204–297 is unknown; sequence EQIVKEKYMY…EQKHYNNDEF (94 aa).

Belongs to the guanylate kinase family.

It is found in the cytoplasm. The catalysed reaction is GMP + ATP = GDP + ADP. Its function is as follows. Essential for recycling GMP and indirectly, cGMP. The polypeptide is Guanylate kinase (gmk) (Mycoplasma mycoides subsp. mycoides SC (strain CCUG 32753 / NCTC 10114 / PG1)).